Reading from the N-terminus, the 515-residue chain is Cytochrome P450 monooxygenase paxP (515 aa).

Residues 20–36 (SLLWKLGVFAVLVYFLL) traverse the membrane as a helical segment. Residue C456 participates in heme binding.

This sequence belongs to the cytochrome P450 family. The cofactor is heme.

Its subcellular location is the membrane. The protein operates within secondary metabolite biosynthesis. Cytochrome P450 monooxygenase; part of the ATM2 gene cluster that mediates the biosynthesis of paxilline, a mycotoxin that acts as an inhibitor of mammalian maxi-K channels. PaxG, the geranylgeranyl diphosphate (GGPP) synthase is proposed to catalyze the first step in paxilline biosynthesis. Condensation of indole-3-glycerol phosphate with GGPP by paxC then forms 3-geranylgeranylindole (3-GGI), followed by epoxidation and cyclization of this intermediate (by paxM and paxB) to form paspaline. Paspaline is subsequently converted to 13-desoxypaxilline by paxP, the latter being then converted to paxilline by paxQ. Finally paxilline can be mono- and di-prenylated by paxD. PaxP can also utilized beta-paxitriol and alpha-PC-M6 as substrates converting them to paxilline. This is Cytochrome P450 monooxygenase paxP from Penicillium paxilli.